Consider the following 364-residue polypeptide: Tripartite motif-containing protein 54 (364 aa).

An RING-type zinc finger spans residues 26-82; the sequence is CPICLEMFSKPVVILPCQHNLCRKCANDVFQASNPLWQSRGSTTVSSGGRFRCPSCR. Residues 121 to 163 form a B box-type zinc finger; it reads EQHLMCEEHEDEKINIYCLSCEVPTCSLCKVFGAHKDCEVAPL. C126, H129, C149, and H155 together coordinate Zn(2+). The interval 168–211 is mediates microtubule-binding and homooligomerization; the sequence is KRQKSELSDGIAMLVAGNDRVQAVITQMEEVCQTIEDNSRRQKQ. A coiled-coil region spans residues 194–252; sequence QMEEVCQTIEDNSRRQKQLLNQKFETLCAVLEERKGELLQALARVQEEKLQRVRSLIRQ. One can recognise a COS domain in the interval 271–329; sequence MEEPQMALYLQQAKELINKVGAMSKVELAGRPEPGYESMEQFSVIVEHVAEMLRTIDFQ. The disordered stretch occupies residues 328-364; sequence FQPGASGDEEDDEVTLDGEEGNTGLEEERLDGPEGLH. Residues 334–347 show a composition bias toward acidic residues; sequence GDEEDDEVTLDGEE. Basic and acidic residues predominate over residues 353–364; sequence EEERLDGPEGLH.

In terms of assembly, homooligomer and heterooligomer. Interacts with TRIM63 and probably with TRIM55. Interacts with tubulin.

Its subcellular location is the cytoplasm. It is found in the cytoskeleton. The protein localises to the myofibril. The protein resides in the sarcomere. It localises to the z line. May bind and stabilize microtubules during myotubes formation. This chain is Tripartite motif-containing protein 54 (Trim54), found in Rattus norvegicus (Rat).